A 22-amino-acid chain; its full sequence is Superoxide dismutase [Cu-Zn] 2 (22 aa).

Belongs to the Cu-Zn superoxide dismutase family. As to quaternary structure, homodimer. Requires Cu cation as cofactor. The cofactor is Zn(2+). In terms of tissue distribution, dominant isozyme in roots.

It localises to the cytoplasm. The catalysed reaction is 2 superoxide + 2 H(+) = H2O2 + O2. Destroys radicals which are normally produced within the cells and which are toxic to biological systems. The chain is Superoxide dismutase [Cu-Zn] 2 from Picea abies (Norway spruce).